The chain runs to 235 residues: Caffeoyl-CoA O-methyltransferase (235 aa).

Substrate is bound at residue Lys8. Residues Val52, Glu74, 76-77 (GV), Ser82, Asp100, and Ala129 each bind S-adenosyl-L-methionine. Asp151 is a binding site for substrate. Asp151 lines the a divalent metal cation pocket. An S-adenosyl-L-methionine-binding site is contributed by Asp153. Positions 177 and 178 each coordinate a divalent metal cation.

This sequence belongs to the class I-like SAM-binding methyltransferase superfamily. Cation-dependent O-methyltransferase family. CCoAMT subfamily. Requires a divalent metal cation as cofactor.

The enzyme catalyses (E)-caffeoyl-CoA + S-adenosyl-L-methionine = (E)-feruloyl-CoA + S-adenosyl-L-homocysteine + H(+). Its pathway is aromatic compound metabolism; phenylpropanoid biosynthesis. In terms of biological role, methylates caffeoyl-CoA to feruloyl-CoA and 5-hydroxyferuloyl-CoA to sinapoyl-CoA. Plays a role in the synthesis of feruloylated polysaccharides. Involved in the reinforcement of the plant cell wall. Also involved in the responding to wounding or pathogen challenge by the increased formation of cell wall-bound ferulic acid polymers. In Populus kitakamiensis (Aspen), this protein is Caffeoyl-CoA O-methyltransferase.